Here is a 142-residue protein sequence, read N- to C-terminus: Transcriptional regulator MraZ (142 aa).

SpoVT-AbrB domains lie at 5-51 (ASAL…PRPE) and 77-120 (AMDV…DAQT).

The protein belongs to the MraZ family. Forms oligomers.

The protein resides in the cytoplasm. The protein localises to the nucleoid. This chain is Transcriptional regulator MraZ, found in Burkholderia mallei (strain NCTC 10247).